We begin with the raw amino-acid sequence, 1161 residues long: Mitogen-activated protein kinase kinase kinase (1161 aa).

The region spanning 56–120 (GDGSLWTALY…PKDFVTDEDP (65 aa)) is the SH3 domain. One can recognise a Protein kinase domain in the interval 142-402 (LDIKEVIGSG…KEILKQLESI (261 aa)). Residues 148–156 (IGSGGFCKV) and lysine 169 contribute to the ATP site. The active-site Proton acceptor is aspartate 264. The residue at position 300 (threonine 300) is a Phosphothreonine; by autocatalysis. Residue serine 304 is modified to Phosphoserine; by autocatalysis. Leucine-zipper regions lie at residues 426–447 (IAGV…EEQL) and 461–482 (LKIR…ELVM). Phosphoserine is present on residues serine 525 and serine 560. Disordered stretches follow at residues 560-615 (SQLS…GSGG) and 658-678 (TTNN…NQLN). Residues 571–583 (AQTSTHSSFSKSA) are compositionally biased toward polar residues. A compositionally biased stretch (low complexity) spans 591-601 (QQQNQQQVASL). Phosphoserine is present on residues serine 685, serine 773, and serine 792. Residues 790–830 (GNSPAVGRKKHSLDSSSHHPPANGSNSFALPNQLTLPSEDN) form a disordered region. Residues 812-830 (NGSNSFALPNQLTLPSEDN) show a composition bias toward polar residues. Position 862 is a phosphothreonine (threonine 862). 3 disordered regions span residues 988–1014 (RSAS…EAVN), 1045–1093 (EQRQ…SAGS), and 1137–1161 (GGSS…LERC). Low complexity predominate over residues 989–1010 (SASPSLSSSSTTASASPSIAST). A Phosphoserine modification is found at serine 993. Residues 1052 to 1063 (NQKKQRPKHITK) show a composition bias toward basic residues. Residues 1073–1086 (GQHHEHDDHNDPQH) show a composition bias toward basic and acidic residues. The span at 1150 to 1161 (PQTQSCEQLERC) shows a compositional bias: polar residues.

Belongs to the protein kinase superfamily. STE Ser/Thr protein kinase family. MAP kinase kinase kinase subfamily. As to quaternary structure, homodimer. Requires Mg(2+) as cofactor. In terms of processing, autophosphorylation on serine and threonine residues within the activation loop plays a role in enzyme activation. In terms of tissue distribution, expressed both maternally and zygotically. Expressed uniformly in large quantities in the early embryo (stages 1-4). In the late embryo, expression is ubiquitous, but expression levels are dramatically reduced. Expressed in the adult head and thorax, and in S2 cells.

The catalysed reaction is L-seryl-[protein] + ATP = O-phospho-L-seryl-[protein] + ADP + H(+). It catalyses the reaction L-threonyl-[protein] + ATP = O-phospho-L-threonyl-[protein] + ADP + H(+). With respect to regulation, homodimerization via the leucine zipper domains is required for autophosphorylation and subsequent activation. Activated by C6-ceramide. Activates the JUN N-terminal pathway during dorsal closure. This is Mitogen-activated protein kinase kinase kinase from Drosophila melanogaster (Fruit fly).